An 855-amino-acid chain; its full sequence is MAEGFAVNRQWIGPEEAEELLDFDIATQMNEEGPLNPGINLFRVPGITETEKQEYCNILQPKLQDLRNEIQEVKLEEGNAGKFRRARFLRYSDETILSLIHLFIGYCTYLCKRNKLGTLVHNIDIEAPQEECYSNRERGTTVNIKYSRRCCIGTTALYLLLLTGIIIYTQTTQAQVVWRLPPLVVPVEESEIIFWDCWAPEEPACQDFLGAMIYLKASTNISIQEGPTLGNWAREIWGTLFKKATRQCRRGRIWRRWNETITGPSGCANNTCYNISVIVPDYQCYLDRVDTWLQGKVNISLCLTGGKMLYNKDTKQLSYCTDPLQIPLINYTFGPNQTCMWNTSQIQDSDIPKCGWWNQIAYYNSCRWEQTDVKFHCQRTQSQPGTWLRTISSWKQKNRWEWRPDFESEKVRVSLQCNTTKNLTFAMRSSGDYGEVTGAWIEFGCHRNKSKLHSDARFRIRCRWNVGDNTSLIDTCGNDPNVSGANPVDCTMYANRMYNCSLQNGFTMKVDDLIMHFNMTKAVEMYNIAGNWSCTSDLPSTWGYMNCNCTNSSSTDSNKMACPKRQGILRNWYNPVAGLRQSLEKYQVVKQPDYLVVPREVMEYKPRRKRAAIHVMLALATVLSMAGAGTGATAIGMVTQYHQVLATHQETIEKITEALKVNNLRLVTLEHQVLVIGLKVEAIEKFLYTAFAMQELGCNQNQFFCKVPPELWQRYNMTINQTIWNHGNITLGEWYNQTKDLQQKFYEIIMDMEQNNVQGRKGLQQLQEWEDWVGWLGNIPRYLKGLLGGILGIGLGVLLLILCLPTLVDCIRNCISKVLGYTVIAMPEVEEEEIQPPMELRRNGRQCDMSEKEEE.

Residues 1–784 (MAEGFAVNRQ…WLGNIPRYLK (784 aa)) are Extracellular-facing. N-linked (GlcNAc...) asparagine; by host glycans are attached at residues asparagine 220, asparagine 258, asparagine 269, asparagine 274, asparagine 298, asparagine 330, asparagine 336, asparagine 342, asparagine 418, asparagine 422, asparagine 448, asparagine 469, asparagine 481, asparagine 499, asparagine 518, asparagine 531, and asparagine 548. A fusion peptide region spans residues 615 to 635 (VMLALATVLSMAGAGTGATAI). The stretch at 642–692 (HQVLATHQETIEKITEALKVNNLRLVTLEHQVLVIGLKVEAIEKFLYTAFA) forms a coiled coil. Positions 661 to 679 (VNNLRLVTLEHQVLVIGLK) are immunosuppression. Asparagine 716, asparagine 720, and asparagine 736 each carry an N-linked (GlcNAc...) asparagine; by host glycan. Residues 735 to 771 (YNQTKDLQQKFYEIIMDMEQNNVQGRKGLQQLQEWED) are a coiled coil. A helical transmembrane segment spans residues 785–805 (GLLGGILGIGLGVLLLILCLP). The Cytoplasmic portion of the chain corresponds to 806 to 855 (TLVDCIRNCISKVLGYTVIAMPEVEEEEIQPPMELRRNGRQCDMSEKEEE). Residues 835–855 (QPPMELRRNGRQCDMSEKEEE) form a disordered region.

In terms of assembly, the mature envelope protein (Env) consists of a trimer of SU-TM heterodimers attached by noncovalent interactions or by a labile interchain disulfide bond. In terms of processing, specific enzymatic cleavages in vivo yield mature proteins. Envelope glycoproteins are synthesized as an inactive precursor that is N-glycosylated and processed likely by host cell furin or by a furin-like protease in the Golgi to yield the mature SU and TM proteins. The cleavage site between SU and TM requires the minimal sequence [KR]-X-[KR]-R.

It is found in the virion membrane. The protein localises to the host cell membrane. The surface protein (SU) attaches the virus to the host cell by binding to its receptor. This interaction triggers the refolding of the transmembrane protein (TM) and is thought to activate its fusogenic potential by unmasking its fusion peptide. Fusion occurs at the host cell plasma membrane. In terms of biological role, the transmembrane protein (TM) acts as a class I viral fusion protein. Under the current model, the protein has at least 3 conformational states: pre-fusion native state, pre-hairpin intermediate state, and post-fusion hairpin state. During viral and target cell membrane fusion, the coiled coil regions (heptad repeats) assume a trimer-of-hairpins structure, positioning the fusion peptide in close proximity to the C-terminal region of the ectodomain. The formation of this structure appears to drive apposition and subsequent fusion of viral and target cell membranes. Membranes fusion leads to delivery of the nucleocapsid into the cytoplasm. The polypeptide is Envelope glycoprotein gp150 (env) (Feline immunodeficiency virus (strain UK2) (FIV)).